The chain runs to 250 residues: Probable transcriptional regulatory protein Lferr_0060 (250 aa).

Belongs to the TACO1 family.

Its subcellular location is the cytoplasm. This is Probable transcriptional regulatory protein Lferr_0060 from Acidithiobacillus ferrooxidans (strain ATCC 53993 / BNL-5-31) (Leptospirillum ferrooxidans (ATCC 53993)).